A 524-amino-acid polypeptide reads, in one-letter code: uncharacterized protein (524 aa).

A disordered region spans residues 1–65 (MSDPFFTRPE…IDEENEDTYE (65 aa)). Positions 21 to 32 (SKREKENQKLER) are enriched in basic and acidic residues. A compositionally biased stretch (acidic residues) spans 51 to 64 (GFEDEIDEENEDTY). 7 WD repeats span residues 131 to 176 (IETA…DTEN), 206 to 245 (DHVK…PQHC), 248 to 287 (HHRD…YIET), 290 to 329 (GHQD…QLVF), 342 to 380 (YMEG…PLFT), 409 to 448 (PQPR…RSFE), and 457 to 503 (SVYG…PNSG).

It localises to the nucleus. This is an uncharacterized protein from Schizosaccharomyces pombe (strain 972 / ATCC 24843) (Fission yeast).